The chain runs to 336 residues: Atypical chemokine receptor 1 (336 aa).

The Extracellular portion of the chain corresponds to 1–63 (MGNCLHQAEL…CNLLDDSSLP (63 aa)). Residues Asn-16, Asn-27, and Asn-33 are each glycosylated (N-linked (GlcNAc...) asparagine). Cystine bridges form between Cys-51/Cys-276 and Cys-129/Cys-195. The helical transmembrane segment at 64–84 (FFILASVLGILASSTVLFLLF) threads the bilayer. At 85-95 (RPLFRWQLCPG) the chain is on the cytoplasmic side. A helical transmembrane segment spans residues 96–116 (WPVLAQLAVGSTLFSIVVPIL). The Extracellular portion of the chain corresponds to 117-129 (APGLGNTRSSAPC). Residues 130-153 (SLGYCVWYGSAFAQALLLGCHASL) traverse the membrane as a helical segment. At 154-166 (GPKLGAGQVPGLT) the chain is on the cytoplasmic side. A helical transmembrane segment spans residues 167 to 187 (LGLSVGLWGAAALLTLPITLA). Residues 188–207 (SDASDGLCTPIYSTELKALQ) are Extracellular-facing. Residues 208 to 228 (ATHTVACFAIFVLLPLGLFGA) traverse the membrane as a helical segment. The Cytoplasmic segment spans residues 229–244 (KGLKKVLGMGPGPWMN). A helical membrane pass occupies residues 245–265 (ILWVWFIFWWPHGVVLGLDFL). The Extracellular segment spans residues 266-287 (VRSKLLLLPTCLAQQVLDLLLN). The chain crosses the membrane as a helical span at residues 288-308 (LAEALAIVHCVATPLLLALFC). The Cytoplasmic portion of the chain corresponds to 309–336 (HQATRTLVPSLPLPERWSSPVDTLGSKS).

Belongs to the G-protein coupled receptor 1 family. Atypical chemokine receptor subfamily.

It localises to the early endosome. The protein localises to the recycling endosome. It is found in the membrane. Functionally, atypical chemokine receptor that controls chemokine levels and localization via high-affinity chemokine binding that is uncoupled from classic ligand-driven signal transduction cascades, resulting instead in chemokine sequestration, degradation, or transcytosis. Also known as interceptor (internalizing receptor) or chemokine-scavenging receptor or chemokine decoy receptor. Has a promiscuous chemokine-binding profile, interacting with inflammatory chemokines of both the CXC and the CC subfamilies but not with homeostatic chemokines. Acts as a receptor for chemokines including CCL2, CCL5, CCL7, CCL11, CCL13, CCL14, CCL17, CXCL5, CXCL6, IL8/CXCL8, CXCL11, GRO, RANTES, MCP-1 and TARC. May regulate chemokine bioavailability and, consequently, leukocyte recruitment through two distinct mechanisms: when expressed in endothelial cells, it sustains the abluminal to luminal transcytosis of tissue-derived chemokines and their subsequent presentation to circulating leukocytes; when expressed in erythrocytes, serves as blood reservoir of cognate chemokines but also as a chemokine sink, buffering potential surges in plasma chemokine levels. The sequence is that of Atypical chemokine receptor 1 (ACKR1) from Saguinus imperator (Emperor tamarin).